The chain runs to 892 residues: Alanine--tRNA ligase (892 aa).

Zn(2+) contacts are provided by His596, His600, Cys700, and His704.

Belongs to the class-II aminoacyl-tRNA synthetase family. The cofactor is Zn(2+).

It localises to the cytoplasm. It carries out the reaction tRNA(Ala) + L-alanine + ATP = L-alanyl-tRNA(Ala) + AMP + diphosphate. In terms of biological role, catalyzes the attachment of alanine to tRNA(Ala) in a two-step reaction: alanine is first activated by ATP to form Ala-AMP and then transferred to the acceptor end of tRNA(Ala). Also edits incorrectly charged Ser-tRNA(Ala) and Gly-tRNA(Ala) via its editing domain. The polypeptide is Alanine--tRNA ligase (Methanococcus maripaludis (strain DSM 14266 / JCM 13030 / NBRC 101832 / S2 / LL)).